The chain runs to 189 residues: Cyclin-dependent kinase inhibitor 5 (189 aa).

Residues 73 to 93 are compositionally biased toward polar residues; that stretch reads KQQKQQLIPSVNQCQTKNPRA. The interval 73–107 is disordered; that stretch reads KQQKQQLIPSVNQCQTKNPRASSGPAKKLEPDTTT.

This sequence belongs to the CDI family. ICK/KRP subfamily. Interacts with CYCD4-1. Does not interact with CDKA-1. In terms of tissue distribution, expressed in flowers and at lower levels in roots and leaves.

The protein resides in the nucleus. It is found in the nucleoplasm. Functionally, inhibits CYCD2-1/CDKA-1 complex kinase activity without interaction with the complex. This Arabidopsis thaliana (Mouse-ear cress) protein is Cyclin-dependent kinase inhibitor 5 (KRP5).